Here is a 459-residue protein sequence, read N- to C-terminus: tRNA modification GTPase MnmE (459 aa).

(6S)-5-formyl-5,6,7,8-tetrahydrofolate is bound by residues Arg22, Glu85, and Arg124. The TrmE-type G domain maps to 221 to 380 (GLSTVIVGKP…LEIQIRDLFF (160 aa)). Residue Asn231 participates in K(+) binding. Residues 231–236 (NVGKSS), 250–256 (TEVAGTT), and 275–278 (DTAG) each bind GTP. Ser235 serves as a coordination point for Mg(2+). K(+) contacts are provided by Thr250, Val252, and Thr255. Thr256 is a binding site for Mg(2+). Residue Lys459 coordinates (6S)-5-formyl-5,6,7,8-tetrahydrofolate.

The protein belongs to the TRAFAC class TrmE-Era-EngA-EngB-Septin-like GTPase superfamily. TrmE GTPase family. As to quaternary structure, homodimer. Heterotetramer of two MnmE and two MnmG subunits. K(+) serves as cofactor.

It localises to the cytoplasm. Its function is as follows. Exhibits a very high intrinsic GTPase hydrolysis rate. Involved in the addition of a carboxymethylaminomethyl (cmnm) group at the wobble position (U34) of certain tRNAs, forming tRNA-cmnm(5)s(2)U34. This chain is tRNA modification GTPase MnmE, found in Staphylococcus aureus (strain MW2).